Reading from the N-terminus, the 49-residue chain is uncharacterized protein (49 aa).

Residues 20–42 (LFLVGLTIGKMATSRILSFLGFI) form a helical membrane-spanning segment.

Its subcellular location is the membrane. This is an uncharacterized protein from Dictyostelium discoideum (Social amoeba).